Consider the following 218-residue polypeptide: 7-cyano-7-deazaguanine synthase (218 aa).

Residue Tyr9 to Leu19 coordinates ATP. Positions 185, 193, 196, and 199 each coordinate Zn(2+).

This sequence belongs to the QueC family. Zn(2+) serves as cofactor.

It carries out the reaction 7-carboxy-7-deazaguanine + NH4(+) + ATP = 7-cyano-7-deazaguanine + ADP + phosphate + H2O + H(+). It participates in purine metabolism; 7-cyano-7-deazaguanine biosynthesis. Functionally, catalyzes the ATP-dependent conversion of 7-carboxy-7-deazaguanine (CDG) to 7-cyano-7-deazaguanine (preQ(0)). This is 7-cyano-7-deazaguanine synthase from Pseudoalteromonas translucida (strain TAC 125).